A 111-amino-acid polypeptide reads, in one-letter code: uncharacterized protein (111 aa).

To M.tuberculosis Rv1271c.

This is an uncharacterized protein from Mycobacterium bovis (strain ATCC BAA-935 / AF2122/97).